The following is a 98-amino-acid chain: DNA-binding protein Fis (98 aa).

A DNA-binding region (H-T-H motif) is located at residues Gln-74 to Lys-93.

This sequence belongs to the transcriptional regulatory Fis family. As to quaternary structure, homodimer.

Its function is as follows. Activates ribosomal RNA transcription. Plays a direct role in upstream activation of rRNA promoters. This is DNA-binding protein Fis from Vibrio atlanticus (strain LGP32) (Vibrio splendidus (strain Mel32)).